Reading from the N-terminus, the 122-residue chain is Large ribosomal subunit protein uL14c (122 aa).

Belongs to the universal ribosomal protein uL14 family. As to quaternary structure, part of the 50S ribosomal subunit.

Its subcellular location is the plastid. It localises to the chloroplast. Its function is as follows. Binds to 23S rRNA. The polypeptide is Large ribosomal subunit protein uL14c (Tupiella akineta (Green alga)).